The following is a 685-amino-acid chain: Probable cysteine desulfurase (685 aa).

Residues 1–282 (MTRSPCSTTS…RDEHEVFDVA (282 aa)) form a cargo-loading domain region. 2 disordered regions span residues 48–135 (SIRP…TSAG) and 162–185 (PTPAGPEAPPQSAPPAPRGQVPDT). Residues 71–85 (ATAATSAGRTAAGTA) are compositionally biased toward low complexity. Positions 102-121 (LPPPASPAPEAPPQAAPPAP) are enriched in pro residues. A compositionally biased stretch (low complexity) spans 122–135 (RGSAPDATAATSAG). Residues 164-178 (PAGPEAPPQSAPPAP) show a composition bias toward pro residues. Position 502 is an N6-(pyridoxal phosphate)lysine (Lys-502). Cys-640 (cysteine persulfide intermediate) is an active-site residue.

This sequence belongs to the class-V pyridoxal-phosphate-dependent aminotransferase family. Csd subfamily. Isolated from bacteria in a complex with encapsulin 2A (AC I3NID5), strongly suggesting it is found in a type 2A encapsulin nanocompartment. There are 1-2 copies of this protein in each encapsulin shell. The cofactor is pyridoxal 5'-phosphate.

It localises to the encapsulin nanocompartment. It is found in the cell membrane. It catalyses the reaction (sulfur carrier)-H + L-cysteine = (sulfur carrier)-SH + L-alanine. In terms of biological role, cargo protein of a type 2A encapsulin nanocompartment involved in sulfur metabolism. Cysteine desulfurases mobilize the sulfur from L-cysteine to yield L-alanine, an essential step in sulfur metabolism for biosynthesis of a variety of sulfur-containing biomolecules. The polypeptide is Probable cysteine desulfurase (Mycolicibacterium paratuberculosis (strain ATCC BAA-968 / K-10) (Mycobacterium paratuberculosis)).